Here is a 365-residue protein sequence, read N- to C-terminus: 3-dehydroquinate synthase (365 aa).

NAD(+) is bound by residues 106–110 (GVIGD), 130–131 (TT), lysine 142, lysine 151, and 169–172 (FFAT). Zn(2+)-binding residues include glutamate 184, histidine 247, and histidine 264.

The protein belongs to the sugar phosphate cyclases superfamily. Dehydroquinate synthase family. Requires Co(2+) as cofactor. Zn(2+) is required as a cofactor. It depends on NAD(+) as a cofactor.

The protein resides in the cytoplasm. It carries out the reaction 7-phospho-2-dehydro-3-deoxy-D-arabino-heptonate = 3-dehydroquinate + phosphate. It participates in metabolic intermediate biosynthesis; chorismate biosynthesis; chorismate from D-erythrose 4-phosphate and phosphoenolpyruvate: step 2/7. Its function is as follows. Catalyzes the conversion of 3-deoxy-D-arabino-heptulosonate 7-phosphate (DAHP) to dehydroquinate (DHQ). The chain is 3-dehydroquinate synthase from Listeria monocytogenes serotype 4b (strain CLIP80459).